The chain runs to 284 residues: Bifunctional protein FolD (284 aa).

NADP(+) is bound by residues 166–168 (GAS) and Ile232.

This sequence belongs to the tetrahydrofolate dehydrogenase/cyclohydrolase family. Homodimer.

The enzyme catalyses (6R)-5,10-methylene-5,6,7,8-tetrahydrofolate + NADP(+) = (6R)-5,10-methenyltetrahydrofolate + NADPH. It catalyses the reaction (6R)-5,10-methenyltetrahydrofolate + H2O = (6R)-10-formyltetrahydrofolate + H(+). Its pathway is one-carbon metabolism; tetrahydrofolate interconversion. Functionally, catalyzes the oxidation of 5,10-methylenetetrahydrofolate to 5,10-methenyltetrahydrofolate and then the hydrolysis of 5,10-methenyltetrahydrofolate to 10-formyltetrahydrofolate. This is Bifunctional protein FolD from Shewanella halifaxensis (strain HAW-EB4).